The primary structure comprises 358 residues: Type II methyltransferase M.HpaII (358 aa).

An SAM-dependent MTase C5-type domain is found at 32 to 356 (FTFIDLFAGI…KKILEKLGNL (325 aa)). Cys-103 is an active-site residue.

This sequence belongs to the class I-like SAM-binding methyltransferase superfamily. C5-methyltransferase family. In terms of assembly, monomer.

It catalyses the reaction a 2'-deoxycytidine in DNA + S-adenosyl-L-methionine = a 5-methyl-2'-deoxycytidine in DNA + S-adenosyl-L-homocysteine + H(+). In terms of biological role, a methylase that recognizes the double-stranded sequence 5'-CCGG-3', methylates C-2 on both strands, and protects the DNA from cleavage by the HpaII endonuclease. In Haemophilus parainfluenzae, this protein is Type II methyltransferase M.HpaII.